Reading from the N-terminus, the 266-residue chain is Elongator complex protein 6 (266 aa).

Belongs to the ELP6 family. As to quaternary structure, component of the elongator complex which consists of ELP1, ELP2, ELP3, ELP4, ELP5 and ELP6.

It localises to the cytoplasm. It is found in the nucleus. The protein operates within tRNA modification; 5-methoxycarbonylmethyl-2-thiouridine-tRNA biosynthesis. Component of the elongator complex which is required for multiple tRNA modifications, including mcm5U (5-methoxycarbonylmethyl uridine), mcm5s2U (5-methoxycarbonylmethyl-2-thiouridine), and ncm5U (5-carbamoylmethyl uridine). The elongator complex catalyzes formation of carboxymethyluridine in the wobble base at position 34 in tRNAs. Involved in cell migration. The sequence is that of Elongator complex protein 6 from Homo sapiens (Human).